A 156-amino-acid polypeptide reads, in one-letter code: MNTVVKLNNIFSGLPKKKKTKVLGRGIGCGKGKTSGRGHKGQKARSGVSINGFEGGQQSIFTRLPKRGFNSLFKSKYSIVNLSTIQRLIDSKKIENVSAITKQVLFNLGVIPSIKEKIKILGDGKLNTAVAIEYDFISKSAGSQVTLLSSVSEDKV.

The segment at 26–46 (GIGCGKGKTSGRGHKGQKARS) is disordered. Basic residues predominate over residues 34–43 (TSGRGHKGQK).

Belongs to the universal ribosomal protein uL15 family. As to quaternary structure, part of the 50S ribosomal subunit.

Functionally, binds to the 23S rRNA. The chain is Large ribosomal subunit protein uL15 from Ehrlichia canis (strain Jake).